Reading from the N-terminus, the 130-residue chain is Small ribosomal subunit protein uS8 (130 aa).

Belongs to the universal ribosomal protein uS8 family. As to quaternary structure, part of the 30S ribosomal subunit. Contacts proteins S5 and S12.

Its function is as follows. One of the primary rRNA binding proteins, it binds directly to 16S rRNA central domain where it helps coordinate assembly of the platform of the 30S subunit. The sequence is that of Small ribosomal subunit protein uS8 from Coxiella burnetii (strain RSA 331 / Henzerling II).